The following is a 1100-amino-acid chain: MSDSDDYLQDDPDDQAFDDFADVASSPPPPKRRRLQARNQTRNTTSRRNEDNSVASDSDSFVVDDDDASKTDELPSPSQASYHFADHPENEASSKYKIFVPKRNNPQENIFVTQLTQPPSPPEMIRGPRWKKPDPPPPPPPAPTKPTPKTTRGPGHEDYGDDEDLDAAIAASLASFEEENSRLSFSTAQNSPPAPVASDNAPTNTAQTESFDFLDDIPDDAFDSDLSLTPPPPAPPSNSSRPSSFMQSSNRPLGVRQTTLFNMATRNQAPQPPQGEQVFAPPEKVEAPTQHKLNQEAISTWVYPTNLGKTRDYQFNITQKGLFHNLLVALPTGLGKTFIAATIMLNWFRWTRDAQIVFVAPTKPLVAQQVSACFGVAGIPRSQTTMLTGEAAPGIRAQEWQDKRVFFMTPQTLINDLKSGIADPKRIVLLVVDEAHRATGGYAYVEVVKFLRRYNQSFRVLALTATPGSTVESVQAVIDGLEISKVEIRTEQSLDIREYVHARNTEVQTFKNSEEMVLCMDLLSKTLQPLVDQLRTLNAYWGRDPMALTAYGLTKSRQQWMLSDAGRNSSFGLKGKVNAIFTVLASLAHGIDLLKYHGITPFYRHLLHFQGNTDGQKGGKYQRQIVQDEHFKKLMNHLSPWTKNPEFIGHPKLEYLKQVVLNHFMDAGEGSAGAEGASQSTTRVMIFVHFRDSAEEVARVLKRYEPMIRPQVFVGQASAKGSDGMNQKTQLGVVQKFKQGTYNTIVATSIGEEGLDIGEVDLIVCYDSSASPIRMLQRMGRTGRKRAGNIVLLLMEGKEEESYIKAKDNYEKMQQMIASGTRFTFHDDKSPRILPPGVKPIVDKRHIDIPEENEEQALPEPKRRGRVPKKPPKKFHMPDNVITGFTKASSLAGGSKRTAQDKRKARTPTPEPVDIPALEDVILTAEQQRELEHRYCTIGDTSPEVIRTPRTDAFPRLQLVSRPTKVVKHGSLTRRMIDALQKMDKTSSDCEGRFKEVLALESRRPAEESLIHQSISRPGNKKRLRKGRSGQPEPRLPPSRVHEEKDEDLDGSQPISPEQLLSSFTDRQGPKPFSSSPRSENLELDADFEAPDLDTLLGRR.

Residues 1 to 21 (MSDSDDYLQDDPDDQAFDDFA) show a composition bias toward acidic residues. Positions 1–250 (MSDSDDYLQD…RPSSFMQSSN (250 aa)) are disordered. Residues 38-61 (RNQTRNTTSRRNEDNSVASDSDSF) show a composition bias toward low complexity. The span at 84–94 (FADHPENEASS) shows a compositional bias: basic and acidic residues. Polar residues predominate over residues 104 to 117 (NNPQENIFVTQLTQ). A compositionally biased stretch (pro residues) spans 135-146 (PPPPPPPAPTKP). Polar residues-rich tracts occupy residues 182-191 (RLSFSTAQNS) and 200-209 (NAPTNTAQTE). Positions 212–223 (DFLDDIPDDAFD) are enriched in acidic residues. Positions 237 to 249 (SNSSRPSSFMQSS) are enriched in low complexity. The Helicase ATP-binding domain maps to 317-485 (ITQKGLFHNL…AVIDGLEISK (169 aa)). 330-337 (LPTGLGKT) contributes to the ATP binding site. Residues 433–436 (DEAH) carry the DEAH box motif. One can recognise a Helicase C-terminal domain in the interval 655–829 (YLKQVVLNHF…GTRFTFHDDK (175 aa)). 2 disordered regions span residues 850–913 (PEEN…PEPV) and 1003–1100 (RRPA…LGRR). 2 stretches are compositionally biased toward basic residues: residues 863–875 (RRGR…PKKF) and 1019–1028 (GNKKRLRKGR). Positions 1053 to 1066 (QPISPEQLLSSFTD) are enriched in polar residues. Acidic residues predominate over residues 1082 to 1092 (LELDADFEAPD).

The protein belongs to the DEAD box helicase family. DEAH subfamily. FANCM sub-subfamily. As to quaternary structure, interacts with the MHF histone-fold complex to form the FANCM-MHF complex.

It is found in the nucleus. The catalysed reaction is ATP + H2O = ADP + phosphate + H(+). Its function is as follows. ATP-dependent DNA helicase involved in DNA damage repair by homologous recombination and in genome maintenance. Capable of unwinding D-loops. Plays a role in limiting crossover recombinants during mitotic DNA double-strand break (DSB) repair. Component of a FANCM-MHF complex which promotes gene conversion at blocked replication forks, probably by reversal of the stalled fork. The chain is ATP-dependent DNA helicase mph1 from Aspergillus terreus (strain NIH 2624 / FGSC A1156).